The primary structure comprises 469 residues: Adenosylhomocysteinase (469 aa).

Positions 63, 139, and 164 each coordinate substrate. 165–167 contributes to the NAD(+) binding site; it reads TTT. K194 and D198 together coordinate substrate. NAD(+) is bound by residues N199, 228-233, E251, N300, 321-323, and N375; these read GYGDVG and IGH.

The protein belongs to the adenosylhomocysteinase family. NAD(+) serves as cofactor.

The protein localises to the cytoplasm. It carries out the reaction S-adenosyl-L-homocysteine + H2O = L-homocysteine + adenosine. It functions in the pathway amino-acid biosynthesis; L-homocysteine biosynthesis; L-homocysteine from S-adenosyl-L-homocysteine: step 1/1. In terms of biological role, may play a key role in the regulation of the intracellular concentration of adenosylhomocysteine. The polypeptide is Adenosylhomocysteinase (Pseudomonas aeruginosa (strain UCBPP-PA14)).